The following is a 263-amino-acid chain: Hydroxyacylglutathione hydrolase (263 aa).

Residues H55, H57, D59, H60, H117, D134, and H172 each contribute to the Zn(2+) site.

It belongs to the metallo-beta-lactamase superfamily. Glyoxalase II family. Monomer. Zn(2+) is required as a cofactor.

The catalysed reaction is an S-(2-hydroxyacyl)glutathione + H2O = a 2-hydroxy carboxylate + glutathione + H(+). It participates in secondary metabolite metabolism; methylglyoxal degradation; (R)-lactate from methylglyoxal: step 2/2. Its function is as follows. Thiolesterase that catalyzes the hydrolysis of S-D-lactoyl-glutathione to form glutathione and D-lactic acid. This chain is Hydroxyacylglutathione hydrolase, found in Shewanella baltica (strain OS185).